The chain runs to 573 residues: MAKQIKGIAASDGVAIAKAYLLVEPDLSFDNESVTDTDAEVAKFNGALNKSKVELTKIRNNAEKQLGADKAAIFDAHLLVLEDPELIQPIEDKIKNESVNAAQALTDVSNQFITIFESMDNEYMAERAADIRDVSKRVLAHILGVELPNPSIVDESVVIIGNDLTPSDTAQLNKEYVQGFVTNIGGRTSHSAIMSRSLEIPAVVGTKSITEEVEAGDTIVVDGMTGDVLINPSDEVIAEYQEKRENFFKDKQELQKLRDAESVTADGHHVELAANIGTPNDLPGVIENGAEGIGLYRTEFLYMGRDQMPTEEEQFEAYKAVLEAMKGKRVVVRTLDIGGDKELPYLDLPEEMNPFLGYRAIRLCLDQPEIFRPQLRALLRASVFGKLNIMFPMVATIQEFRDAKALLEEERANLKNEGYEVADDIELGIMVEIPSTAALADIFAKEVDFFSIGTNDLIQYTMAADRMSERVSYLYQPYNPAILRLVKQVIEASHAEGKWTGMCGEMAGDQTAIPLLLGLGLDEFSMSATSILKARRLIRSLNESEMKELSERAVQCATSEEVVDLVEEYTKNA.

The active-site Tele-phosphohistidine intermediate is the His190. The substrate site is built by Arg297 and Arg333. Mg(2+) contacts are provided by Glu432 and Asp456. Residue 455–456 (ND) participates in phosphoenolpyruvate binding. Arg466 is a binding site for substrate. Cys503 serves as the catalytic Proton donor.

This sequence belongs to the PEP-utilizing enzyme family. Homodimer. Mg(2+) serves as cofactor.

Its subcellular location is the cytoplasm. It catalyses the reaction L-histidyl-[protein] + phosphoenolpyruvate = N(pros)-phospho-L-histidyl-[protein] + pyruvate. General (non sugar-specific) component of the phosphoenolpyruvate-dependent sugar phosphotransferase system (sugar PTS). This major carbohydrate active-transport system catalyzes the phosphorylation of incoming sugar substrates concomitantly with their translocation across the cell membrane. Enzyme I transfers the phosphoryl group from phosphoenolpyruvate (PEP) to the phosphoryl carrier protein (HPr). The sequence is that of Phosphoenolpyruvate-protein phosphotransferase (ptsI) from Staphylococcus carnosus (strain TM300).